Reading from the N-terminus, the 303-residue chain is uncharacterized protein (303 aa).

This is an uncharacterized protein from Bacillus subtilis (strain 168).